Reading from the N-terminus, the 507-residue chain is ATP synthase subunit alpha, chloroplastic (507 aa).

170–177 (GDRQTGKT) is an ATP binding site.

This sequence belongs to the ATPase alpha/beta chains family. F-type ATPases have 2 components, CF(1) - the catalytic core - and CF(0) - the membrane proton channel. CF(1) has five subunits: alpha(3), beta(3), gamma(1), delta(1), epsilon(1). CF(0) has four main subunits: a, b, b' and c.

The protein resides in the plastid. The protein localises to the chloroplast thylakoid membrane. The enzyme catalyses ATP + H2O + 4 H(+)(in) = ADP + phosphate + 5 H(+)(out). Produces ATP from ADP in the presence of a proton gradient across the membrane. The alpha chain is a regulatory subunit. This chain is ATP synthase subunit alpha, chloroplastic, found in Nymphaea alba (White water-lily).